The chain runs to 136 residues: MIRFLRNNALYFAWLICSTGTVMSIYYSYLLNIEPCVLCYYQRICLFPLSIILGIATYREDNLVKIYALPLSITGMVIAVYQICLQEISGMTIDICGRVSCSTKLFVFGFITVPMASALAFCAISCLLILSGSKKK.

The helical transmembrane segment at 7-26 threads the bilayer; that stretch reads NNALYFAWLICSTGTVMSIY. A disulfide bond links cysteine 36 and cysteine 39. A run of 2 helical transmembrane segments spans residues 41–60 and 67–84; these read YQRI…TYRE and YALP…YQIC. A disulfide bridge connects residues cysteine 96 and cysteine 101. Residues 109–133 traverse the membrane as a helical segment; sequence GFITVPMASALAFCAISCLLILSGS.

It belongs to the DsbB family. BdbC subfamily.

It localises to the cell inner membrane. In terms of biological role, required for disulfide bond formation in some proteins. This Chlamydia caviae (strain ATCC VR-813 / DSM 19441 / 03DC25 / GPIC) (Chlamydophila caviae) protein is Probable disulfide formation protein.